Reading from the N-terminus, the 431-residue chain is Histidine--tRNA ligase (431 aa).

This sequence belongs to the class-II aminoacyl-tRNA synthetase family.

Its subcellular location is the cytoplasm. It catalyses the reaction tRNA(His) + L-histidine + ATP = L-histidyl-tRNA(His) + AMP + diphosphate + H(+). The protein is Histidine--tRNA ligase (hisS) of Pyrococcus abyssi (strain GE5 / Orsay).